A 332-amino-acid polypeptide reads, in one-letter code: Ketol-acid reductoisomerase (NADP(+)) (332 aa).

Positions 2-182 (AKIYHDLEVS…GATRAGVLET (181 aa)) constitute a KARI N-terminal Rossmann domain. Residues 25–28 (YGSQ), R48, S53, and 83–86 (DTEQ) each bind NADP(+). The active site involves H108. G134 contacts NADP(+). In terms of domain architecture, KARI C-terminal knotted spans 183 to 328 (TFKEETETDL…KVIREMMPWL (146 aa)). The Mg(2+) site is built by D191, E195, E227, and E231. S252 lines the substrate pocket.

This sequence belongs to the ketol-acid reductoisomerase family. Mg(2+) serves as cofactor.

It carries out the reaction (2R)-2,3-dihydroxy-3-methylbutanoate + NADP(+) = (2S)-2-acetolactate + NADPH + H(+). The enzyme catalyses (2R,3R)-2,3-dihydroxy-3-methylpentanoate + NADP(+) = (S)-2-ethyl-2-hydroxy-3-oxobutanoate + NADPH + H(+). Its pathway is amino-acid biosynthesis; L-isoleucine biosynthesis; L-isoleucine from 2-oxobutanoate: step 2/4. The protein operates within amino-acid biosynthesis; L-valine biosynthesis; L-valine from pyruvate: step 2/4. Functionally, involved in the biosynthesis of branched-chain amino acids (BCAA). Catalyzes an alkyl-migration followed by a ketol-acid reduction of (S)-2-acetolactate (S2AL) to yield (R)-2,3-dihydroxy-isovalerate. In the isomerase reaction, S2AL is rearranged via a Mg-dependent methyl migration to produce 3-hydroxy-3-methyl-2-ketobutyrate (HMKB). In the reductase reaction, this 2-ketoacid undergoes a metal-dependent reduction by NADPH to yield (R)-2,3-dihydroxy-isovalerate. This chain is Ketol-acid reductoisomerase (NADP(+)), found in Dictyoglomus thermophilum (strain ATCC 35947 / DSM 3960 / H-6-12).